We begin with the raw amino-acid sequence, 164 residues long: Ubiquitin-fold modifier-conjugating enzyme 1 (164 aa).

Residue Cys-116 is the Glycyl thioester intermediate of the active site.

Belongs to the ubiquitin-conjugating enzyme family. UFC1 subfamily.

E2-like enzyme which forms an intermediate with UFM1 via a thioester linkage. The protein is Ubiquitin-fold modifier-conjugating enzyme 1 of Drosophila sechellia (Fruit fly).